The sequence spans 506 residues: Maturase K (506 aa).

Belongs to the intron maturase 2 family. MatK subfamily.

Its subcellular location is the plastid. It is found in the chloroplast. In terms of biological role, usually encoded in the trnK tRNA gene intron. Probably assists in splicing its own and other chloroplast group II introns. The sequence is that of Maturase K from Artanema fimbriatum.